A 704-amino-acid polypeptide reads, in one-letter code: Elongation factor G (704 aa).

In terms of domain architecture, tr-type G spans 8–290; the sequence is EKYRNIGICA…GVVRYLPAPN (283 aa). GTP-binding positions include 17–24, 88–92, and 142–145; these read AHVDAGKT, DTPGH, and NKMD.

Belongs to the TRAFAC class translation factor GTPase superfamily. Classic translation factor GTPase family. EF-G/EF-2 subfamily.

It localises to the cytoplasm. In terms of biological role, catalyzes the GTP-dependent ribosomal translocation step during translation elongation. During this step, the ribosome changes from the pre-translocational (PRE) to the post-translocational (POST) state as the newly formed A-site-bound peptidyl-tRNA and P-site-bound deacylated tRNA move to the P and E sites, respectively. Catalyzes the coordinated movement of the two tRNA molecules, the mRNA and conformational changes in the ribosome. The protein is Elongation factor G of Francisella tularensis subsp. holarctica (strain FTNF002-00 / FTA).